A 213-amino-acid polypeptide reads, in one-letter code: Thiamine import ATP-binding protein ThiQ (213 aa).

The region spanning 1 to 212 (MIELNVTFDY…EQGRIVADQL (212 aa)) is the ABC transporter domain. 31 to 38 (GESGAGKS) is a binding site for ATP.

This sequence belongs to the ABC transporter superfamily. Thiamine importer (TC 3.A.1.19.1) family. As to quaternary structure, the complex is composed of two ATP-binding proteins (ThiQ), two transmembrane proteins (ThiP) and a solute-binding protein (ThiB).

Its subcellular location is the cell inner membrane. The catalysed reaction is thiamine(out) + ATP + H2O = thiamine(in) + ADP + phosphate + H(+). In terms of biological role, part of the ABC transporter complex ThiBPQ involved in thiamine import. Responsible for energy coupling to the transport system. The sequence is that of Thiamine import ATP-binding protein ThiQ from Haemophilus ducreyi (strain 35000HP / ATCC 700724).